Here is a 94-residue protein sequence, read N- to C-terminus: 2S albumin-like cysteine protease inhibitor (94 aa).

3 disulfides stabilise this stretch: cysteine 12–cysteine 35, cysteine 36–cysteine 82, and cysteine 48–cysteine 89.

It belongs to the 2S seed storage albumins family. In terms of tissue distribution, expressed in seeds (at protein level).

Cysteine protease inhibitor that likely functions in defense against insects by inhibiting cysteine proteases in the midgut of herbivore insects such as C.maculatus. Selectively inhibits cathepsin L, as well as papain, ficin and bromelain with lower efficiency. Shows antitumor activity, inhibiting the growth of prostate cancer cell lines PC3 and DU145, and the gastric cancer cell line Hs746T. No activity against cathepsin B or serine proteases (trypsin, human plasma kallikrein and elastase). The chain is 2S albumin-like cysteine protease inhibitor from Araucaria angustifolia (Brazilian pine tree).